The chain runs to 236 residues: uncharacterized protein (236 aa).

Residues 1-23 (MRRILSILVFAIMLAGCSSNAST) form the signal peptide. The disordered stretch occupies residues 22–62 (STEKQHAGGEKTVKAEPQSTSSQKDSTDDYQPNSQVTDDRT). Positions 24–35 (EKQHAGGEKTVK) are enriched in basic and acidic residues.

This is an uncharacterized protein from Bacillus subtilis (strain 168).